We begin with the raw amino-acid sequence, 90 residues long: Putative regulatory protein Cbei_1140 (90 aa).

This sequence belongs to the RemA family.

In Clostridium beijerinckii (strain ATCC 51743 / NCIMB 8052) (Clostridium acetobutylicum), this protein is Putative regulatory protein Cbei_1140.